A 497-amino-acid polypeptide reads, in one-letter code: Zinc metalloproteinase nas-28 (497 aa).

Positions 1 to 14 (MFFPVVFFIPFVLG) are cleaved as a signal peptide. Positions 15 to 120 (APTQKALEKI…IENGNYRSKR (106 aa)) are excised as a propeptide. N76 is a glycosylation site (N-linked (GlcNAc...) asparagine). The Peptidase M12A domain maps to 121–319 (QAIVDTTNFW…IGVNKLYNCT (199 aa)). 7 cysteine pairs are disulfide-bonded: C164–C318, C185–C206, C328–C339, C331–C342, C344–C353, C364–C398, and C427–C447. H214 serves as a coordination point for Zn(2+). E215 is a catalytic residue. Residues H218 and H224 each contribute to the Zn(2+) site. N-linked (GlcNAc...) asparagine glycosylation occurs at N317. Residues 324–354 (IQMKCSNCGITDSRNCNQCKCPRYFTGASCD) enclose the EGF-like domain. Residues 364–483 (CNGAVLQATS…LTFSIQYRAV (120 aa)) enclose the CUB domain. The N-linked (GlcNAc...) asparagine glycan is linked to N394.

Zn(2+) serves as cofactor.

The protein resides in the secreted. In terms of biological role, metalloprotease. The polypeptide is Zinc metalloproteinase nas-28 (nas-28) (Caenorhabditis elegans).